The following is a 400-amino-acid chain: Elongation factor Tu 2 (400 aa).

A tr-type G domain is found at 10–209; sequence KPHVNIGTIG…AVDEYIPTPQ (200 aa). The tract at residues 19-26 is G1; the sequence is GHVDHGKT. 19-26 is a GTP binding site; sequence GHVDHGKT. Thr26 is a Mg(2+) binding site. The interval 60-64 is G2; sequence GITIN. Positions 81–84 are G3; it reads DCPG. GTP contacts are provided by residues 81–85 and 136–139; these read DCPGH and NKAD. The interval 136–139 is G4; the sequence is NKAD. A G5 region spans residues 174 to 176; the sequence is SAL.

Belongs to the TRAFAC class translation factor GTPase superfamily. Classic translation factor GTPase family. EF-Tu/EF-1A subfamily. In terms of assembly, monomer.

It is found in the cytoplasm. It catalyses the reaction GTP + H2O = GDP + phosphate + H(+). In terms of biological role, GTP hydrolase that promotes the GTP-dependent binding of aminoacyl-tRNA to the A-site of ribosomes during protein biosynthesis. The sequence is that of Elongation factor Tu 2 from Pelotomaculum thermopropionicum (strain DSM 13744 / JCM 10971 / SI).